A 670-amino-acid chain; its full sequence is MGEPGKRVGIHRVRCFAKIKVFLLALIWAYISKILSGVYMSTMLTQLERQFNISTSIVGLINGSFEMGNLLVIVFVSYFGTKLHRPIMIGVGCAVMGLGCFIISLPHFLMGRYEYETTISPTSNLSSNSFLCVENRSQTLKPTQDPAECVKEIKSLMWIYVLVGNIIRGIGETPIMPLGISYIEDFAKSENSPLYIGILEVGKMIGPILGYLMGPFCANIYVDTGSVNTDDLTITPTDTRWVGAWWIGFLVCAGVNVLTSIPFFFFPKTLPKEGLQDNGDGTENAKEEKHRDKAKEENQGIIKEFFLMMKNLFCNPIYMLCVLTSVLQVNGVANIVIYKPKYLEHHFGISTAKAVFLIGLYTTPSVSAGYLISGFIMKKLKITLKKAAIIALCLFMSECLLSLCNFMLTCDTTPIAGLTTSYEGIQQSFDMENKFLSDCNTRCNCLTKTWDPVCGNNGLAYMSPCLAGCEKSVGTGANMVFQNCSCIRSSGNSSAVLGLCKKGPDCANKLQYFLIITVFCCFFYSLATIPGYMVFLRCMKSEEKSLGIGLQAFFMRLFAGIPAPIYFGALIDRTCLHWGTLKCGEPGACRTYEVSSFRRLYLGLPAALRGSIILPSFFILRLIRKLQIPGDTDSSEIELAETKPTEKESECTDMHKSSKVENDGELKTKL.

The Cytoplasmic portion of the chain corresponds to 1–20 (MGEPGKRVGIHRVRCFAKIK). The helical transmembrane segment at 21-40 (VFLLALIWAYISKILSGVYM) threads the bilayer. The Extracellular portion of the chain corresponds to 41-59 (STMLTQLERQFNISTSIVG). A glycan (N-linked (GlcNAc...) asparagine) is linked at asparagine 52. A helical transmembrane segment spans residues 60-80 (LINGSFEMGNLLVIVFVSYFG). The Cytoplasmic segment spans residues 81-86 (TKLHRP). Residues 87-111 (IMIGVGCAVMGLGCFIISLPHFLMG) traverse the membrane as a helical segment. The Extracellular portion of the chain corresponds to 112–155 (RYEYETTISPTSNLSSNSFLCVENRSQTLKPTQDPAECVKEIKS). 2 N-linked (GlcNAc...) asparagine glycosylation sites follow: asparagine 124 and asparagine 135. The helical transmembrane segment at 156-184 (LMWIYVLVGNIIRGIGETPIMPLGISYIE) threads the bilayer. Residues 185-203 (DFAKSENSPLYIGILEVGK) lie on the Cytoplasmic side of the membrane. Residues 204–224 (MIGPILGYLMGPFCANIYVDT) traverse the membrane as a helical segment. Residues 225-242 (GSVNTDDLTITPTDTRWV) lie on the Extracellular side of the membrane. Residues 243 to 267 (GAWWIGFLVCAGVNVLTSIPFFFFP) form a helical membrane-spanning segment. Residues 268 to 311 (KTLPKEGLQDNGDGTENAKEEKHRDKAKEENQGIIKEFFLMMKN) lie on the Cytoplasmic side of the membrane. A helical transmembrane segment spans residues 312–333 (LFCNPIYMLCVLTSVLQVNGVA). Residues 334–353 (NIVIYKPKYLEHHFGISTAK) lie on the Extracellular side of the membrane. The helical transmembrane segment at 354-377 (AVFLIGLYTTPSVSAGYLISGFIM) threads the bilayer. Residues 378–381 (KKLK) are Cytoplasmic-facing. The chain crosses the membrane as a helical span at residues 382–405 (ITLKKAAIIALCLFMSECLLSLCN). The Extracellular portion of the chain corresponds to 406–513 (FMLTCDTTPI…PDCANKLQYF (108 aa)). One can recognise a Kazal-like domain in the interval 433–488 (NKFLSDCNTRCNCLTKTWDPVCGNNGLAYMSPCLAGCEKSVGTGANMVFQNCSCIR). Intrachain disulfides connect cysteine 439/cysteine 469, cysteine 445/cysteine 465, and cysteine 454/cysteine 486. Asparagine 483 and asparagine 492 each carry an N-linked (GlcNAc...) asparagine glycan. The chain crosses the membrane as a helical span at residues 514–536 (LIITVFCCFFYSLATIPGYMVFL). The Cytoplasmic portion of the chain corresponds to 537–545 (RCMKSEEKS). A helical membrane pass occupies residues 546–571 (LGIGLQAFFMRLFAGIPAPIYFGALI). Topologically, residues 572–605 (DRTCLHWGTLKCGEPGACRTYEVSSFRRLYLGLP) are extracellular. The chain crosses the membrane as a helical span at residues 606–623 (AALRGSIILPSFFILRLI). Residues 624–670 (RKLQIPGDTDSSEIELAETKPTEKESECTDMHKSSKVENDGELKTKL) are Cytoplasmic-facing. Position 632 is a phosphothreonine (threonine 632). Residues 633–670 (DSSEIELAETKPTEKESECTDMHKSSKVENDGELKTKL) form a disordered region. Phosphoserine is present on residues serine 634 and serine 635. Residues 640 to 670 (AETKPTEKESECTDMHKSSKVENDGELKTKL) are compositionally biased toward basic and acidic residues.

This sequence belongs to the organo anion transporter (TC 2.A.60) family. As to expression, kidney specific.

The protein resides in the cell membrane. Functionally, may mediate the Na(+)-independent transport of organic anions. This is Solute carrier organic anion transporter family member 1A6 (Slco1a6) from Mus musculus (Mouse).